Consider the following 549-residue polypeptide: Glucose-6-phosphate isomerase (549 aa).

Residues Lys80, Lys228, and Lys234 each carry the N6-acetyllysine modification. The active-site Proton donor is Glu355. Catalysis depends on residues His386 and Lys514.

It belongs to the GPI family.

It localises to the cytoplasm. It catalyses the reaction alpha-D-glucose 6-phosphate = beta-D-fructose 6-phosphate. Its pathway is carbohydrate biosynthesis; gluconeogenesis. It participates in carbohydrate degradation; glycolysis; D-glyceraldehyde 3-phosphate and glycerone phosphate from D-glucose: step 2/4. Functionally, catalyzes the reversible isomerization of glucose-6-phosphate to fructose-6-phosphate. This is Glucose-6-phosphate isomerase from Escherichia fergusonii (strain ATCC 35469 / DSM 13698 / CCUG 18766 / IAM 14443 / JCM 21226 / LMG 7866 / NBRC 102419 / NCTC 12128 / CDC 0568-73).